The chain runs to 766 residues: Dolichyl pyrophosphate Glc1Man9GlcNAc2 alpha-1,3-glucosyltransferase (766 aa).

The next 12 helical transmembrane spans lie at Leu-6–Val-26, Tyr-60–Phe-80, Ile-96–Ala-116, Ser-156–Ile-176, Ile-190–Leu-210, Ala-228–His-248, Pro-324–Ile-344, Ala-350–Val-370, Ile-395–Phe-415, Ile-423–Leu-443, Val-452–Leu-472, and Leu-482–Trp-502.

Belongs to the ALG6/ALG8 glucosyltransferase family.

The protein localises to the endoplasmic reticulum membrane. It catalyses the reaction an alpha-D-Glc-(1-&gt;3)-alpha-D-Man-(1-&gt;2)-alpha-D-Man-(1-&gt;2)-alpha-D-Man-(1-&gt;3)-[alpha-D-Man-(1-&gt;2)-alpha-D-Man-(1-&gt;3)-[alpha-D-Man-(1-&gt;2)-alpha-D-Man-(1-&gt;6)]-alpha-D-Man-(1-&gt;6)]-beta-D-Man-(1-&gt;4)-beta-D-GlcNAc-(1-&gt;4)-alpha-D-GlcNAc-diphospho-di-trans,poly-cis-dolichol + a di-trans,poly-cis-dolichyl beta-D-glucosyl phosphate = an alpha-D-Glc-(1-&gt;3)-alpha-D-Glc-(1-&gt;3)-alpha-D-Man-(1-&gt;2)-alpha-D-Man-(1-&gt;2)-alpha-D-Man-(1-&gt;3)-[alpha-D-Man-(1-&gt;2)-alpha-D-Man-(1-&gt;3)-[alpha-D-Man-(1-&gt;2)-alpha-D-Man-(1-&gt;6)]-alpha-D-Man-(1-&gt;6)]-beta-D-Man-(1-&gt;4)-beta-D-GlcNAc-(1-&gt;4)-alpha-D-GlcNAc-diphospho-di-trans,poly-cis-dolichol + a di-trans,poly-cis-dolichyl phosphate + H(+). Its pathway is protein modification; protein glycosylation. Functionally, dolichyl pyrophosphate Glc1Man9GlcNAc2 alpha-1,3-glucosyltransferase that operates in the biosynthetic pathway of dolichol-linked oligosaccharides, the glycan precursors employed in protein asparagine (N)-glycosylation. The assembly of dolichol-linked oligosaccharides begins on the cytosolic side of the endoplasmic reticulum membrane and finishes in its lumen. The sequential addition of sugars to dolichol pyrophosphate produces dolichol-linked oligosaccharides containing fourteen sugars, including two GlcNAcs, nine mannoses and three glucoses. Once assembled, the oligosaccharide is transferred from the lipid to nascent proteins by oligosaccharyltransferases. In the lumen of the endoplasmic reticulum, adds the second glucose residue from dolichyl phosphate glucose (Dol-P-Glc) onto the lipid-linked oligosaccharide intermediate Glc(1)Man(9)GlcNAc(2)-PP-Dol to produce Glc(2)Man(9)GlcNAc(2)-PP-Dol. This chain is Dolichyl pyrophosphate Glc1Man9GlcNAc2 alpha-1,3-glucosyltransferase, found in Caenorhabditis elegans.